The primary structure comprises 118 residues: MTDLIPLEQAHCLPRKGSDHKLGEARLAELLPQVPGWELAEAGMAITRTFRFADYYRTLAFVNALAWIAHREDHHPDLGVHYDRVVVRYSTHDVGGLSENDFICAAKVAQLFDQGITA.

It belongs to the pterin-4-alpha-carbinolamine dehydratase family.

The enzyme catalyses (4aS,6R)-4a-hydroxy-L-erythro-5,6,7,8-tetrahydrobiopterin = (6R)-L-erythro-6,7-dihydrobiopterin + H2O. The chain is Putative pterin-4-alpha-carbinolamine dehydratase from Xanthomonas campestris pv. campestris (strain 8004).